A 430-amino-acid polypeptide reads, in one-letter code: Trigger factor (430 aa).

The 86-residue stretch at Gly-157–Pro-242 folds into the PPIase FKBP-type domain.

This sequence belongs to the FKBP-type PPIase family. Tig subfamily.

The protein localises to the cytoplasm. It carries out the reaction [protein]-peptidylproline (omega=180) = [protein]-peptidylproline (omega=0). In terms of biological role, involved in protein export. Acts as a chaperone by maintaining the newly synthesized protein in an open conformation. Functions as a peptidyl-prolyl cis-trans isomerase. The chain is Trigger factor from Xanthomonas axonopodis pv. citri (strain 306).